The sequence spans 451 residues: UDP-glucosyltransferase 74AE2 (451 aa).

His17 (proton acceptor) is an active-site residue. His17 contributes to the an anthocyanidin binding site. Asp108 (charge relay) is an active-site residue. Thr130, Gln330, His345, Trp348, Asn349, Ser350, Glu353, Asp369, and Gln370 together coordinate UDP-alpha-D-glucose.

This sequence belongs to the UDP-glycosyltransferase family. Expressed at higher levels in roots than in leaves.

It carries out the reaction (20S)-ginsenoside C-K + UDP-alpha-D-glucose = (20S)-ginsenoside F2 + UDP + H(+). The enzyme catalyses (20S)-protopanaxadiol + UDP-alpha-D-glucose = (20S)-ginsenoside Rh2 + UDP + H(+). The protein operates within secondary metabolite biosynthesis; terpenoid biosynthesis. Its function is as follows. Component of the dammarane-type triterpene saponins (e.g. PPD-type ginsenosides or panaxosides) biosynthetic pathway. Glycosyltransferase that catalyzes the biosynthesis of ginsenoside Rh2 from protopanaxadiol (PPD) and the conversion of compound K to ginsenoside F2. This Panax ginseng (Korean ginseng) protein is UDP-glucosyltransferase 74AE2.